The primary structure comprises 120 residues: Basic phospholipase A2 homolog LmutTX (120 aa).

7 cysteine pairs are disulfide-bonded: C26/C114, C28/C44, C43/C95, C49/C120, C50/C88, C57/C81, and C75/C86.

It belongs to the phospholipase A2 family. Group II subfamily. K49 sub-subfamily. As to quaternary structure, monomer. In terms of tissue distribution, expressed by the venom gland.

It localises to the secreted. Snake venom phospholipase A2 homolog that lacks enzymatic activity. Shows moderate cytotoxicity against C2C12 myotubes (activity above 200 ug/mL). Also shows antibacterial activity against both Gram-positive and Gram-negative bacteria. A model of myotoxic mechanism has been proposed: an apo Lys49-PLA2 is activated by the entrance of a hydrophobic molecule (e.g. fatty acid) at the hydrophobic channel of the protein leading to a reorientation of a monomer. This reorientation causes a transition between 'inactive' to 'active' states, causing alignment of C-terminal and membrane-docking sites (MDoS) side-by-side and putting the membrane-disruption sites (MDiS) in the same plane, exposed to solvent and in a symmetric position for both monomers. The MDoS region stabilizes the toxin on membrane by the interaction of charged residues with phospholipid head groups. Subsequently, the MDiS region destabilizes the membrane with penetration of hydrophobic residues. This insertion causes a disorganization of the membrane, allowing an uncontrolled influx of ions (i.e. calcium and sodium), and eventually triggering irreversible intracellular alterations and cell death. This is Basic phospholipase A2 homolog LmutTX from Lachesis muta muta (Bushmaster).